Consider the following 261-residue polypeptide: Sepiapterin reductase (261 aa).

Residues 16–22 (GASRGFG), 44–45 (RT), and 71–72 (DL) contribute to the NADP(+) site. Residues 158–159 (SL) and Tyr-171 each bind substrate. Lys-175 contributes to the NADP(+) binding site. Gly-200 is a binding site for substrate. Residue 202 to 207 (LDTDMH) participates in NADP(+) binding. Asp-258 is a binding site for substrate.

This sequence belongs to the sepiapterin reductase family. Homodimer.

Its subcellular location is the cytoplasm. It catalyses the reaction L-erythro-7,8-dihydrobiopterin + NADP(+) = L-sepiapterin + NADPH + H(+). The enzyme catalyses (6R)-L-erythro-5,6,7,8-tetrahydrobiopterin + 2 NADP(+) = 6-pyruvoyl-5,6,7,8-tetrahydropterin + 2 NADPH + 2 H(+). Catalyzes the final one or two reductions in tetra-hydrobiopterin biosynthesis to form 5,6,7,8-tetrahydrobiopterin. This is Sepiapterin reductase (spr) from Xenopus tropicalis (Western clawed frog).